The primary structure comprises 302 residues: Homoserine O-acetyltransferase (302 aa).

Cys-142 functions as the Acyl-thioester intermediate in the catalytic mechanism. Substrate is bound by residues Lys-163 and Ser-192. His-235 (proton acceptor) is an active-site residue. Glu-237 is an active-site residue. Arg-249 contacts substrate.

This sequence belongs to the MetA family.

It is found in the cytoplasm. It catalyses the reaction L-homoserine + acetyl-CoA = O-acetyl-L-homoserine + CoA. Its pathway is amino-acid biosynthesis; L-methionine biosynthesis via de novo pathway; O-acetyl-L-homoserine from L-homoserine: step 1/1. Its function is as follows. Transfers an acetyl group from acetyl-CoA to L-homoserine, forming acetyl-L-homoserine. The sequence is that of Homoserine O-acetyltransferase from Bacillus pumilus (strain SAFR-032).